The chain runs to 70 residues: Beta-defensin 107A (70 aa).

An N-terminal signal peptide occupies residues 1-26 (MPGAMKIFFFIFAALILLAQIFQART). 2 cysteine pairs are disulfide-bonded: Cys41–Cys55 and Cys45–Cys64.

Belongs to the beta-defensin family.

The protein resides in the secreted. Has antibacterial activity. In Pan troglodytes (Chimpanzee), this protein is Beta-defensin 107A (DEFB107A).